The sequence spans 638 residues: Dihydrolipoyllysine-residue acetyltransferase component of pyruvate dehydrogenase complex (638 aa).

Lipoyl-binding domains follow at residues 2-74 (SEII…IELE) and 117-191 (SQEV…LTLR). Residue lysine 40 is modified to N6-lipoyllysine. The span at 90–117 (PAAPTQAVDEAEAPSPGASATPAPAAAS) shows a compositional bias: low complexity. Residues 90-119 (PAAPTQAVDEAEAPSPGASATPAPAAASQE) form a disordered region. Lysine 157 carries the N6-lipoyllysine modification. The disordered stretch occupies residues 201–220 (APAAAAAASPAPAPLAPAAA). One can recognise a Lipoyl-binding 3 domain in the interval 222–296 (PQEVKVPDIG…GTGDQILTLR (75 aa)). The residue at position 262 (lysine 262) is an N6-lipoyllysine. Over residues 301-320 (APSGPRARGSPGQAAAAPGA) the composition is skewed to low complexity. Residues 301–336 (APSGPRARGSPGQAAAAPGAAPAPAPVGAPSRNGAK) are disordered. One can recognise a Peripheral subunit-binding (PSBD) domain in the interval 338-375 (HAGPAVRQLAREFGVELAAINSTGPRGRILKEDVQAYV). The catalytic stretch occupies residues 382 to 638 (AKEAPAAGAA…LLADIRAILL (257 aa)). Histidine 611 is an active-site residue.

The protein belongs to the 2-oxoacid dehydrogenase family. As to quaternary structure, forms a 24-polypeptide structural core with octahedral symmetry. (R)-lipoate serves as cofactor.

The enzyme catalyses N(6)-[(R)-dihydrolipoyl]-L-lysyl-[protein] + acetyl-CoA = N(6)-[(R)-S(8)-acetyldihydrolipoyl]-L-lysyl-[protein] + CoA. Its function is as follows. The pyruvate dehydrogenase complex catalyzes the overall conversion of pyruvate to acetyl-CoA and CO(2). It contains multiple copies of three enzymatic components: pyruvate dehydrogenase (E1), dihydrolipoamide acetyltransferase (E2) and lipoamide dehydrogenase (E3). The sequence is that of Dihydrolipoyllysine-residue acetyltransferase component of pyruvate dehydrogenase complex from Azotobacter vinelandii.